A 484-amino-acid chain; its full sequence is Signal transduction histidine-protein kinase/phosphatase MprB (484 aa).

The segment covering 1-10 (MAADNAGRWP) has biased composition (low complexity). The tract at residues 1 to 23 (MAADNAGRWPGQPPGPPAPTHPA) is disordered. At 1-31 (MAADNAGRWPGQPPGPPAPTHPASSVSLRWR) the chain is on the cytoplasmic side. Residues 11–20 (GQPPGPPAPT) are compositionally biased toward pro residues. A helical membrane pass occupies residues 32 to 52 (VMLLAMSMVVISVVLMAVAVF). The Extracellular segment spans residues 53–172 (AVTSRALYDD…TGKVLKRLGT (120 aa)). A helical transmembrane segment spans residues 173 to 193 (VLLIVGGLGVAVAAIAGGMVA). The HAMP domain maps to 194–246 (SAGLRPVGRLTQAAERVARTDDLRPIPVIGNDELARLTETFNMMLRALAESRE). Residues 194-484 (SAGLRPVGRL…SPAGSDEAER (291 aa)) are Cytoplasmic-facing. A Histidine kinase domain is found at 254-474 (DAGHELRTPL…AMHVVLPGRP (221 aa)). Histidine 257 carries the post-translational modification Phosphohistidine; by autocatalysis.

The cofactor is Mg(2+). Mn(2+) is required as a cofactor. Autophosphorylated.

Its subcellular location is the cell membrane. The catalysed reaction is ATP + protein L-histidine = ADP + protein N-phospho-L-histidine.. In terms of biological role, member of the two-component regulatory system MprB/MprA which contributes to maintaining a balance among several systems involved in stress resistance and is required for establishment and maintenance of persistent infection in the host. In response to environmental signals MprB acts both as a membrane-associated protein kinase that undergoes autophosphorylation and subsequently transfers the phosphate to MprA, and a protein phosphatase that dephosphorylates phospho-MprA. This chain is Signal transduction histidine-protein kinase/phosphatase MprB (mprB), found in Mycolicibacterium vanbaalenii (strain DSM 7251 / JCM 13017 / BCRC 16820 / KCTC 9966 / NRRL B-24157 / PYR-1) (Mycobacterium vanbaalenii).